The following is a 379-amino-acid chain: Cobalt-precorrin-5B C(1)-methyltransferase (379 aa).

The protein belongs to the CbiD family.

The enzyme catalyses Co-precorrin-5B + S-adenosyl-L-methionine = Co-precorrin-6A + S-adenosyl-L-homocysteine. The protein operates within cofactor biosynthesis; adenosylcobalamin biosynthesis; cob(II)yrinate a,c-diamide from sirohydrochlorin (anaerobic route): step 6/10. Catalyzes the methylation of C-1 in cobalt-precorrin-5B to form cobalt-precorrin-6A. The protein is Cobalt-precorrin-5B C(1)-methyltransferase of Salmonella arizonae (strain ATCC BAA-731 / CDC346-86 / RSK2980).